The primary structure comprises 196 residues: Probable GTP-binding protein EngB (196 aa).

The region spanning 22–196 is the EngB-type G domain; it reads NLPEIALAGR…GNWIEDKISQ (175 aa). GTP contacts are provided by residues 30 to 37, 57 to 61, 75 to 78, 142 to 145, and 175 to 177; these read GRSNVGKS, GKTQT, DVPG, TKMD, and FSS. 2 residues coordinate Mg(2+): Ser-37 and Thr-59.

It belongs to the TRAFAC class TrmE-Era-EngA-EngB-Septin-like GTPase superfamily. EngB GTPase family. Mg(2+) is required as a cofactor.

In terms of biological role, necessary for normal cell division and for the maintenance of normal septation. The polypeptide is Probable GTP-binding protein EngB (Lactobacillus acidophilus (strain ATCC 700396 / NCK56 / N2 / NCFM)).